A 303-amino-acid polypeptide reads, in one-letter code: Porphobilinogen deaminase (303 aa).

The residue at position 235 (cysteine 235) is an S-(dipyrrolylmethanemethyl)cysteine.

This sequence belongs to the HMBS family. Monomer. It depends on dipyrromethane as a cofactor.

The catalysed reaction is 4 porphobilinogen + H2O = hydroxymethylbilane + 4 NH4(+). The protein operates within porphyrin-containing compound metabolism; protoporphyrin-IX biosynthesis; coproporphyrinogen-III from 5-aminolevulinate: step 2/4. Its function is as follows. Tetrapolymerization of the monopyrrole PBG into the hydroxymethylbilane pre-uroporphyrinogen in several discrete steps. In Campylobacter fetus subsp. fetus (strain 82-40), this protein is Porphobilinogen deaminase.